The following is a 266-amino-acid chain: Chymotrypsin-like elastase family member 1 (266 aa).

A signal peptide spans 1–16 (MLRFLVFASLVLCGHS). A propeptide spans 17–26 (TEDVPETDAR) (activation peptide). The Peptidase S1 domain occupies 27 to 264 (VVGGAEARRN…YISWMNNVIA (238 aa)). C56 and C72 are oxidised to a cystine. H71 serves as the catalytic Charge relay system. 4 residues coordinate Ca(2+): E85, N87, Q90, and E95. N-linked (GlcNAc...) asparagine glycosylation occurs at N87. D119 serves as the catalytic Charge relay system. 3 disulfides stabilise this stretch: C153-C220, C184-C200, and C210-C240. Catalysis depends on S214, which acts as the Charge relay system.

The protein belongs to the peptidase S1 family. Elastase subfamily. The cofactor is Ca(2+).

It is found in the secreted. The enzyme catalyses Hydrolysis of proteins, including elastin. Preferential cleavage: Ala-|-Xaa.. In terms of biological role, serine proteases that hydrolyze many proteins in addition to elastin. The sequence is that of Chymotrypsin-like elastase family member 1 (Cela1) from Mus musculus (Mouse).